The primary structure comprises 591 residues: MAERTHACGKVTVEAVGQTVQLKGWVQKRRDLGGLIFIDLRDRTGIVQVVFNPETSKEALEVAETIRSEYVLHVEGTVVERGEGAINDNMATGRIEVQASKVNVLNAAKTTPIIIADDTDASEDVRLKYRYLDLRRPAMFNTFKMRHDVTKTIRNFLDTEEFLEVETPILTKSTPEGARDYLVPSRVHDGEFYALPQSPQLFKQLLMVGGFERYYQVARCFRDEDLRADRQPEFTQIDIEASFLTQDEILEMMERMMTKVMKDAKGVEVSAPFPRMKYADAMARFGSDKPDTRFEMELKDLSEFAVGCGFKVFTSAVENGGQVKAINAKGAASKYSRKDIDALTEFAKVYGAKGLAWLKVEEDGLKGPIAKFFGEEEANVLMSTLEADAGDLLLFVADKKSVVADSLGALRLRLGKELELIDESKFNFLWVTDWPLLEYDEDADRYFAAHHPFTMPFREDVELLETAPEKARAQAYDLVLNGYELGGGSLRIYERDVQEKMFKALGFSQEEAQEQFGFLLEAFEYGTPPHGGIALGLDRLVMLLAGRTNLRDTIAFPKTASASCLLTEAPSPVAEAQLEELSLKLSLKEEK.

Glutamate 176 is a binding site for L-aspartate. Positions 200-203 (QLFK) are aspartate. Arginine 222 is an L-aspartate binding site. Residues 222 to 224 (RDE) and glutamine 231 contribute to the ATP site. Histidine 450 is a binding site for L-aspartate. Glutamate 484 contributes to the ATP binding site. Residue arginine 491 participates in L-aspartate binding. 536-539 (GLDR) lines the ATP pocket.

This sequence belongs to the class-II aminoacyl-tRNA synthetase family. Type 1 subfamily. In terms of assembly, homodimer.

It localises to the cytoplasm. The catalysed reaction is tRNA(Asx) + L-aspartate + ATP = L-aspartyl-tRNA(Asx) + AMP + diphosphate. Functionally, aspartyl-tRNA synthetase with relaxed tRNA specificity since it is able to aspartylate not only its cognate tRNA(Asp) but also tRNA(Asn). Reaction proceeds in two steps: L-aspartate is first activated by ATP to form Asp-AMP and then transferred to the acceptor end of tRNA(Asp/Asn). The sequence is that of Aspartate--tRNA(Asp/Asn) ligase from Bacillus mycoides (strain KBAB4) (Bacillus weihenstephanensis).